A 481-amino-acid polypeptide reads, in one-letter code: 6-phosphogluconate dehydrogenase, decarboxylating (481 aa).

NADP(+)-binding positions include 11–16 (GLAVMG), 34–36 (NRT), 76–78 (VKA), and Asn104. Substrate is bound by residues Asn104 and 130–132 (SGG). Lys184 serves as the catalytic Proton acceptor. 187–188 (HN) serves as a coordination point for substrate. Catalysis depends on Glu191, which acts as the Proton donor. Substrate-binding residues include Tyr192, Lys259, Arg286, Arg445, and His451.

This sequence belongs to the 6-phosphogluconate dehydrogenase family. Homodimer.

The catalysed reaction is 6-phospho-D-gluconate + NADP(+) = D-ribulose 5-phosphate + CO2 + NADPH. It participates in carbohydrate degradation; pentose phosphate pathway; D-ribulose 5-phosphate from D-glucose 6-phosphate (oxidative stage): step 3/3. Catalyzes the oxidative decarboxylation of 6-phosphogluconate to ribulose 5-phosphate and CO(2), with concomitant reduction of NADP to NADPH. This chain is 6-phosphogluconate dehydrogenase, decarboxylating (Pgd), found in Drosophila melanogaster (Fruit fly).